The chain runs to 320 residues: Ferrochelatase (320 aa).

Residues H194 and E275 each contribute to the Fe cation site.

The protein belongs to the ferrochelatase family. In terms of assembly, monomer.

Its subcellular location is the cytoplasm. The catalysed reaction is heme b + 2 H(+) = protoporphyrin IX + Fe(2+). Its pathway is porphyrin-containing compound metabolism; protoheme biosynthesis; protoheme from protoporphyrin-IX: step 1/1. Catalyzes the ferrous insertion into protoporphyrin IX. The chain is Ferrochelatase from Escherichia coli (strain SMS-3-5 / SECEC).